The following is a 211-amino-acid chain: Uridine kinase (211 aa).

12–19 provides a ligand contact to ATP; the sequence is GGSGGGKT.

Belongs to the uridine kinase family.

It localises to the cytoplasm. It catalyses the reaction uridine + ATP = UMP + ADP + H(+). The enzyme catalyses cytidine + ATP = CMP + ADP + H(+). It functions in the pathway pyrimidine metabolism; CTP biosynthesis via salvage pathway; CTP from cytidine: step 1/3. It participates in pyrimidine metabolism; UMP biosynthesis via salvage pathway; UMP from uridine: step 1/1. This chain is Uridine kinase, found in Streptococcus thermophilus (strain CNRZ 1066).